We begin with the raw amino-acid sequence, 238 residues long: Complement C1q-like protein 4 (238 aa).

The first 15 residues, 1 to 15, serve as a signal peptide directing secretion; sequence MVLLLLVAIPLLVHS. The interval 37–102 is disordered; that stretch reads SRGQGPDGAP…PGPGPGGAAP (66 aa). Residues 53 to 96 form the Collagen-like domain; that stretch reads PPGAKGEVGRRGKAGLRGPPGPPGPRGPPGEPGRPGPPGPPGPG. The segment covering 71–96 has biased composition (pro residues); sequence PPGPPGPRGPPGEPGRPGPPGPPGPG. Positions 105–238 constitute a C1q domain; the sequence is GYVPRIAFYA…TFSGFIIYPD (134 aa).

Forms homooligomers, predominantly dimers or trimers. Forms heterooligomers with C1QL1, C1QL2 and C1QL3, when proteins are coexpressed; this interaction does not occur after secretion. Interacts with ADGRB3. In terms of tissue distribution, highly expressed in testis and adipose tissue, brown adipose tissue expressing higher levels than subcutaneous and visceral white adipose tissue. In gonadal fat pad, expressed at lower levels in adipocytes than in the stromal vascular fraction (VSP), which contains preadipocytes, fibroblasts, endothelial cells and occasional immune cells. Expression exhibits sexually dimorphism, with higher levels in females than in males.

Its subcellular location is the secreted. Its function is as follows. May regulate the number of excitatory synapses that are formed on hippocampus neurons. Has no effect on inhibitory synapses. May inhibit adipocyte differentiation at an early stage of the process. The sequence is that of Complement C1q-like protein 4 (C1ql4) from Mus musculus (Mouse).